The sequence spans 290 residues: Small ribosomal subunit biogenesis GTPase RsgA (290 aa).

The CP-type G domain maps to 62 to 213; it reads KNSLVRPPIV…IADTPGFSSL (152 aa). GTP-binding positions include 111 to 114 and 156 to 164; these read SKLD and GQTGVGKST. Positions 237, 242, 244, and 250 each coordinate Zn(2+).

It belongs to the TRAFAC class YlqF/YawG GTPase family. RsgA subfamily. In terms of assembly, monomer. Associates with 30S ribosomal subunit, binds 16S rRNA. The cofactor is Zn(2+).

It is found in the cytoplasm. In terms of biological role, one of several proteins that assist in the late maturation steps of the functional core of the 30S ribosomal subunit. Helps release RbfA from mature subunits. May play a role in the assembly of ribosomal proteins into the subunit. Circularly permuted GTPase that catalyzes slow GTP hydrolysis, GTPase activity is stimulated by the 30S ribosomal subunit. This chain is Small ribosomal subunit biogenesis GTPase RsgA, found in Streptococcus agalactiae serotype III (strain NEM316).